A 224-amino-acid chain; its full sequence is Small ribosomal subunit protein uS13 (224 aa).

Positions 1 to 17 are enriched in basic and acidic residues; that stretch reads MSEKTDKTEKKQKKAEE. Disordered stretches follow at residues 1 to 64 and 184 to 224; these read MSEK…AEEK and HERG…EDKK. Composition is skewed to low complexity over residues 20–30 and 38–47; these read ETASAEAAPAK and AKPAEGAPAD. The segment covering 210–224 has biased composition (basic and acidic residues); the sequence is KKGEQGGAAKKEDKK.

The protein belongs to the universal ribosomal protein uS13 family. In terms of assembly, part of the 30S ribosomal subunit. Forms a loose heterodimer with protein S19. Forms two bridges to the 50S subunit in the 70S ribosome.

Located at the top of the head of the 30S subunit, it contacts several helices of the 16S rRNA. In the 70S ribosome it contacts the 23S rRNA (bridge B1a) and protein L5 of the 50S subunit (bridge B1b), connecting the 2 subunits; these bridges are implicated in subunit movement. The protein is Small ribosomal subunit protein uS13 of Methanocella arvoryzae (strain DSM 22066 / NBRC 105507 / MRE50).